The primary structure comprises 677 residues: WD and tetratricopeptide repeats protein 1 (677 aa).

WD repeat units lie at residues 45–84 (GHSG…KLLS), 88–129 (GHTA…TIHM), 132–172 (DHTN…KHSE), 182–222 (GPMV…NHRK), and 265–305 (RLRV…RPYT). Serine 352 carries the post-translational modification Phosphoserine. TPR repeat units lie at residues 361-394 (LERV…APHN) and 396-431 (MLYG…NPCH). Residues 489–509 (EEKKAAGGGGGPVRLRSTSRK) form a disordered region. Serine 511 bears the Phosphoserine mark. WD repeat units follow at residues 535–575 (NTTT…LVRV) and 578–617 (GDES…EDLT). A disordered region spans residues 655–677 (SSGGAGASDDEDSAEGQVQCRPS).

It functions in the pathway protein modification; protein ubiquitination. Its function is as follows. May function as a substrate receptor for CUL4-DDB1 E3 ubiquitin-protein ligase complex. The chain is WD and tetratricopeptide repeats protein 1 (Wdtc1) from Mus musculus (Mouse).